Here is a 452-residue protein sequence, read N- to C-terminus: UDP-N-acetylmuramoylalanine--D-glutamate ligase (452 aa).

115 to 121 contacts ATP; it reads GTNGKTT.

This sequence belongs to the MurCDEF family.

The protein localises to the cytoplasm. The catalysed reaction is UDP-N-acetyl-alpha-D-muramoyl-L-alanine + D-glutamate + ATP = UDP-N-acetyl-alpha-D-muramoyl-L-alanyl-D-glutamate + ADP + phosphate + H(+). It participates in cell wall biogenesis; peptidoglycan biosynthesis. Cell wall formation. Catalyzes the addition of glutamate to the nucleotide precursor UDP-N-acetylmuramoyl-L-alanine (UMA). In Elusimicrobium minutum (strain Pei191), this protein is UDP-N-acetylmuramoylalanine--D-glutamate ligase.